The chain runs to 114 residues: Cuticle protein AMP5 (114 aa).

The residue at position 1 (Gln-1) is a Pyrrolidone carboxylic acid. In terms of domain architecture, Chitin-binding type R&amp;R spans 18–83 (AGNYFYEFET…VDSPLIPVAP (66 aa)).

As to expression, arthrodial membrane.

This chain is Cuticle protein AMP5, found in Homarus americanus (American lobster).